We begin with the raw amino-acid sequence, 596 residues long: Proline--tRNA ligase (596 aa).

It belongs to the class-II aminoacyl-tRNA synthetase family. ProS type 1 subfamily. Homodimer.

It is found in the cytoplasm. It catalyses the reaction tRNA(Pro) + L-proline + ATP = L-prolyl-tRNA(Pro) + AMP + diphosphate. In terms of biological role, catalyzes the attachment of proline to tRNA(Pro) in a two-step reaction: proline is first activated by ATP to form Pro-AMP and then transferred to the acceptor end of tRNA(Pro). As ProRS can inadvertently accommodate and process non-cognate amino acids such as alanine and cysteine, to avoid such errors it has two additional distinct editing activities against alanine. One activity is designated as 'pretransfer' editing and involves the tRNA(Pro)-independent hydrolysis of activated Ala-AMP. The other activity is designated 'posttransfer' editing and involves deacylation of mischarged Ala-tRNA(Pro). The misacylated Cys-tRNA(Pro) is not edited by ProRS. This Prochlorococcus marinus (strain NATL1A) protein is Proline--tRNA ligase.